A 182-amino-acid chain; its full sequence is Adenine phosphoribosyltransferase (182 aa).

Position 133 to 137 (133 to 137 (ATGGS)) interacts with AMP.

This sequence belongs to the purine/pyrimidine phosphoribosyltransferase family. Homodimer. Mg(2+) serves as cofactor.

Its subcellular location is the cytoplasm. The protein localises to the nucleus. It carries out the reaction AMP + diphosphate = 5-phospho-alpha-D-ribose 1-diphosphate + adenine. The protein operates within purine metabolism; AMP biosynthesis via salvage pathway; AMP from adenine: step 1/1. Catalyzes a salvage reaction resulting in the formation of AMP, that is energically less costly than de novo synthesis. The sequence is that of Adenine phosphoribosyltransferase (APT1) from Yarrowia lipolytica (strain CLIB 122 / E 150) (Yeast).